The sequence spans 473 residues: 3-isopropylmalate dehydratase large subunit 2 (473 aa).

[4Fe-4S] cluster contacts are provided by Cys-350, Cys-410, and Cys-413.

Belongs to the aconitase/IPM isomerase family. LeuC type 1 subfamily. In terms of assembly, heterodimer of LeuC and LeuD. It depends on [4Fe-4S] cluster as a cofactor.

It catalyses the reaction (2R,3S)-3-isopropylmalate = (2S)-2-isopropylmalate. It participates in amino-acid biosynthesis; L-leucine biosynthesis; L-leucine from 3-methyl-2-oxobutanoate: step 2/4. Catalyzes the isomerization between 2-isopropylmalate and 3-isopropylmalate, via the formation of 2-isopropylmaleate. In Salmonella typhimurium (strain LT2 / SGSC1412 / ATCC 700720), this protein is 3-isopropylmalate dehydratase large subunit 2.